Consider the following 368-residue polypeptide: D-alanine--D-alanine ligase (368 aa).

Residues K151–D358 enclose the ATP-grasp domain. An ATP-binding site is contributed by K179–E234. Mg(2+) is bound by residues D313, E325, and N327.

Belongs to the D-alanine--D-alanine ligase family. Requires Mg(2+) as cofactor. The cofactor is Mn(2+).

The protein resides in the cytoplasm. It catalyses the reaction 2 D-alanine + ATP = D-alanyl-D-alanine + ADP + phosphate + H(+). Its pathway is cell wall biogenesis; peptidoglycan biosynthesis. In terms of biological role, cell wall formation. The polypeptide is D-alanine--D-alanine ligase (Rhodococcus erythropolis (strain PR4 / NBRC 100887)).